Here is a 137-residue protein sequence, read N- to C-terminus: Nucleoside diphosphate kinase (137 aa).

Lys9, Phe57, Arg85, Thr91, Arg102, and Asn112 together coordinate ATP. Catalysis depends on His115, which acts as the Pros-phosphohistidine intermediate.

This sequence belongs to the NDK family. In terms of assembly, homotetramer. The cofactor is Mg(2+).

It is found in the cytoplasm. The catalysed reaction is a 2'-deoxyribonucleoside 5'-diphosphate + ATP = a 2'-deoxyribonucleoside 5'-triphosphate + ADP. It carries out the reaction a ribonucleoside 5'-diphosphate + ATP = a ribonucleoside 5'-triphosphate + ADP. Major role in the synthesis of nucleoside triphosphates other than ATP. The ATP gamma phosphate is transferred to the NDP beta phosphate via a ping-pong mechanism, using a phosphorylated active-site intermediate. The polypeptide is Nucleoside diphosphate kinase (Nitratiruptor sp. (strain SB155-2)).